We begin with the raw amino-acid sequence, 79 residues long: Serine protease inhibitor Kazal-type 1-like (79 aa).

A signal peptide spans 1–23; the sequence is MKVAIIFLLSALALLNLAGNTTA. Residues 26 to 79 enclose the Kazal-like domain; that stretch reads IGKKANCPNTLVGCPRDYDPVCGTDGKTYANECILCFENRKFGTSIRIQRRGLC. 3 disulfide bridges follow: Cys-32–Cys-61, Cys-39–Cys-58, and Cys-47–Cys-79.

Seminal vesicle.

The protein localises to the secreted. Functionally, serine protease inhibitor which exhibits anti-trypsin activity. In the pancreas, protects against trypsin-catalyzed premature activation of zymogens. Its function is as follows. In the male reproductive tract, binds to sperm heads where it modulates sperm capacitance by inhibiting calcium uptake and nitrogen oxide (NO) production. This is Serine protease inhibitor Kazal-type 1-like from Rattus norvegicus (Rat).